A 527-amino-acid chain; its full sequence is Amine oxidase [flavin-containing] A (527 aa).

N-acetylmethionine is present on Met1. Topologically, residues 1-497 are cytoplasmic; the sequence is MESLQKTSDA…PSFWERNLPS (497 aa). At Ser383 the chain carries Phosphoserine. The residue at position 406 (Cys406) is an S-8alpha-FAD cysteine. The chain crosses the membrane as a helical; Anchor for type IV membrane protein span at residues 498 to 518; the sequence is VSGLLKIVGFSTSITALWFVM. At 519–527 the chain is on the mitochondrial intermembrane side; the sequence is YRFRLLSRS. The interval 520 to 522 is interaction with membrane phospholipid headgroups; the sequence is RFR.

This sequence belongs to the flavin monoamine oxidase family. Monomer, homo- or heterodimer (containing two subunits of similar size). Each subunit contains a covalently bound flavin. Enzymatically active as monomer. FAD is required as a cofactor.

The protein resides in the mitochondrion outer membrane. It carries out the reaction a secondary aliphatic amine + O2 + H2O = a primary amine + an aldehyde + H2O2. The enzyme catalyses a primary methyl amine + O2 + H2O = an aldehyde + H2O2 + NH4(+). The catalysed reaction is (R)-adrenaline + O2 + H2O = (R)-3,4-dihydroxymandelaldehyde + methylamine + H2O2. It catalyses the reaction dopamine + O2 + H2O = 3,4-dihydroxyphenylacetaldehyde + H2O2 + NH4(+). It carries out the reaction tyramine + O2 + H2O = (4-hydroxyphenyl)acetaldehyde + H2O2 + NH4(+). The enzyme catalyses (R)-noradrenaline + O2 + H2O = (R)-3,4-dihydroxymandelaldehyde + H2O2 + NH4(+). The catalysed reaction is serotonin + O2 + H2O = (5-hydroxyindol-3-yl)acetaldehyde + H2O2 + NH4(+). It catalyses the reaction kynuramine + O2 + H2O = 3-(2-aminophenyl)-3-oxopropanal + H2O2 + NH4(+). It carries out the reaction tryptamine + O2 + H2O = indole-3-acetaldehyde + H2O2 + NH4(+). The enzyme catalyses 2-phenylethylamine + O2 + H2O = 2-phenylacetaldehyde + H2O2 + NH4(+). Its function is as follows. Catalyzes the oxidative deamination of primary and some secondary amine such as neurotransmitters, with concomitant reduction of oxygen to hydrogen peroxide and has important functions in the metabolism of neuroactive and vasoactive amines in the central nervous system and peripheral tissues. Preferentially oxidizes serotonin. Also catalyzes the oxidative deamination of kynuramine to 3-(2-aminophenyl)-3-oxopropanal that can spontaneously condense to 4-hydroxyquinoline. This chain is Amine oxidase [flavin-containing] A, found in Bos taurus (Bovine).